A 480-amino-acid polypeptide reads, in one-letter code: Salicylate hydroxylase asL1 (480 aa).

The chain crosses the membrane as a helical span at residues 17 to 37; sequence PMEIAIVGGGIVGVILAIGLT. Residues E47 and A60 each coordinate FAD. A glycan (N-linked (GlcNAc...) asparagine) is linked at N87. Position 131 (R131) interacts with FAD. Residue N168 is glycosylated (N-linked (GlcNAc...) asparagine). Catalysis depends on residues R213 and Y246. An N-linked (GlcNAc...) asparagine glycan is attached at N250. D329 and A342 together coordinate FAD. N-linked (GlcNAc...) asparagine glycosylation is found at N400 and N464.

Belongs to the paxM FAD-dependent monooxygenase family. FAD is required as a cofactor.

The protein resides in the membrane. Its pathway is secondary metabolite biosynthesis; terpenoid biosynthesis. In terms of biological role, salicylate hydroxylase; part of the gene cluster that mediates the biosynthesis of xenovulene A, an unusual meroterpenoid that has potent inhibitory effects on the human gamma-aminobutyrate A (GABAA) benzodiazepine receptor. The first step of xenovulene A biosynthesis is the biosynthesis of 3-methylorcinaldehyde performed by the non-reducing polyketide synthase aspks1. The salicylate hydroxylase asL1 then catalyzes the oxidative dearomatization of 3-methylorcinaldehyde to yield a dearomatized hydroxycyclohexadione. The 2-oxoglutarate-dependent dioxygenase asL3 further catalyzes the oxidative ring expansion to provide the first tropolone metabolite. The cytochrome P450 monooxygenase asR2 allows the synthesis of tropolone hemiacetal. In parallel, a previously unrecognised class of terpene cyclase, asR6, produces alpha-humulene from farnesylpyrophosphate (FPP). The putative Diels-Alderase asR5 probably catalyzes the formation of the tropolone-humulene skeleton by linking humulene and the polyketide moiety. Oxidative-ring contractions catalyzed by asL4 and asL6 then processively remove carbon atoms from the polyketide to yield xenovulene A. The sequence is that of Salicylate hydroxylase asL1 from Sarocladium schorii (Acremonium strictum (strain IMI 501407)).